Consider the following 156-residue polypeptide: Endogenous retrovirus group K member 18 Pro protein (156 aa).

The Peptidase A2 domain occupies 21-96 (LEGLVDTGAD…IPLNLWGRDL (76 aa)). Asp26 is a catalytic residue. One can recognise a G-patch domain in the interval 111 to 156 (YSPMSQKIMTKMGYIPGKGLGKNEDGIKVPIEAKINHGREGTGYPF).

This sequence belongs to the peptidase A2 family. HERV class-II K(HML-2) subfamily. As to quaternary structure, active as a homodimer. Post-translationally, autoproteolytically processed at the N-terminus. Expected C-terminal autoprocessing not detected. The sequence shown is that of the processed Pro protein.

It carries out the reaction Processing at the authentic HIV-1 PR recognition site and release of the mature p17 matrix and the p24 capsid protein, as a result of the cleavage of the -SQNY-|-PIVQ- cleavage site.. Retroviral proteases have roles in the processing of the primary translation products and the maturation of the viral particle. Endogenous Pro proteins may have kept, lost or modified their original function during evolution. In Homo sapiens (Human), this protein is Endogenous retrovirus group K member 18 Pro protein (ERVK-18).